A 205-amino-acid polypeptide reads, in one-letter code: Guanylate kinase (205 aa).

In terms of domain architecture, Guanylate kinase-like spans 17–195; it reads PRLTVLSGPS…VSRELLALML (179 aa). ATP is bound at residue 24 to 31; that stretch reads GPSGVGKS.

It belongs to the guanylate kinase family.

It localises to the cytoplasm. It catalyses the reaction GMP + ATP = GDP + ADP. Essential for recycling GMP and indirectly, cGMP. This is Guanylate kinase from Streptomyces kasugaensis.